The sequence spans 541 residues: Zinc finger protein 513 (541 aa).

A disordered region spans residues Met-1–Pro-118. Acidic residues predominate over residues Leu-44 to Gly-55. Phosphoserine occurs at positions 85 and 96. The segment covering Glu-103 to Arg-115 has biased composition (basic and acidic residues). C2H2-type zinc fingers lie at residues Tyr-150–His-172, Phe-178–His-200, Tyr-206–His-228, Phe-360–His-382, Phe-388–His-410, Tyr-416–His-438, Phe-444–His-466, and Phe-472–His-494. The interval Lys-492–Pro-541 is disordered.

This sequence belongs to the krueppel C2H2-type zinc-finger protein family. As to quaternary structure, binds DNA. Can associate with the proximal promoter regions of PAX6 and SP4, and their known targets including ARR3, RHO, OPN1MW2 and OPN1SW. Widely expressed. In the eye, expression is greatest in the retina and least in the lens and cornea.

It localises to the nucleus. Its function is as follows. Transcriptional regulator that plays a role in retinal development and maintenance. The polypeptide is Zinc finger protein 513 (Znf513) (Mus musculus (Mouse)).